The sequence spans 371 residues: Queuine tRNA-ribosyltransferase (371 aa).

Aspartate 89 acts as the Proton acceptor in catalysis. Substrate contacts are provided by residues 89–93 (DSGGF), aspartate 143, glutamine 185, and glycine 212. The tract at residues 243–249 (GVGKPED) is RNA binding. The active-site Nucleophile is the aspartate 262. Residues 267–271 (TRNAR) are RNA binding; important for wobble base 34 recognition. Zn(2+) is bound by residues cysteine 300, cysteine 302, cysteine 305, and histidine 331.

Belongs to the queuine tRNA-ribosyltransferase family. In terms of assembly, homodimer. Within each dimer, one monomer is responsible for RNA recognition and catalysis, while the other monomer binds to the replacement base PreQ1. It depends on Zn(2+) as a cofactor.

It catalyses the reaction 7-aminomethyl-7-carbaguanine + guanosine(34) in tRNA = 7-aminomethyl-7-carbaguanosine(34) in tRNA + guanine. It participates in tRNA modification; tRNA-queuosine biosynthesis. Functionally, catalyzes the base-exchange of a guanine (G) residue with the queuine precursor 7-aminomethyl-7-deazaguanine (PreQ1) at position 34 (anticodon wobble position) in tRNAs with GU(N) anticodons (tRNA-Asp, -Asn, -His and -Tyr). Catalysis occurs through a double-displacement mechanism. The nucleophile active site attacks the C1' of nucleotide 34 to detach the guanine base from the RNA, forming a covalent enzyme-RNA intermediate. The proton acceptor active site deprotonates the incoming PreQ1, allowing a nucleophilic attack on the C1' of the ribose to form the product. After dissociation, two additional enzymatic reactions on the tRNA convert PreQ1 to queuine (Q), resulting in the hypermodified nucleoside queuosine (7-(((4,5-cis-dihydroxy-2-cyclopenten-1-yl)amino)methyl)-7-deazaguanosine). This chain is Queuine tRNA-ribosyltransferase, found in Pseudomonas putida (strain ATCC 47054 / DSM 6125 / CFBP 8728 / NCIMB 11950 / KT2440).